Consider the following 238-residue polypeptide: uncharacterized protein (238 aa).

The next 7 membrane-spanning stretches (helical) occupy residues 19-39 (FIYGMLLANPVWAHIFLLLGW), 64-84 (WSVIYFAAAVIFAIPALIYNW), 85-105 (QVLYFMFAMLPFVAVNIYFTK), 112-132 (LWNDLAGILIFALAGMGSYYF), 141-161 (ILWVAIYPTLFFIGTTLYVKS), 176-196 (VIFHLLCALIFVVSQQFILAL), and 218-238 (VGLIEFAITAVFFILLLVATL).

To B.subtilis YwiC.

Its subcellular location is the cell membrane. This is an uncharacterized protein from Haemophilus influenzae (strain ATCC 51907 / DSM 11121 / KW20 / Rd).